The chain runs to 489 residues: GTPase Der (489 aa).

2 consecutive EngA-type G domains span residues 3–166 and 201–374; these read PVVA…FDDV and IKLA…DSST. Residues 9-16, 56-60, 118-121, 207-214, 254-258, and 319-322 each bind GTP; these read GRPNVGKS, DTGGI, NKTD, DTAGV, and NKWD. Residues 375–459 form the KH-like domain; it reads KRISTSILTR…PIRIEFREGT (85 aa).

Belongs to the TRAFAC class TrmE-Era-EngA-EngB-Septin-like GTPase superfamily. EngA (Der) GTPase family. Associates with the 50S ribosomal subunit.

In terms of biological role, GTPase that plays an essential role in the late steps of ribosome biogenesis. The sequence is that of GTPase Der from Psychromonas ingrahamii (strain DSM 17664 / CCUG 51855 / 37).